The chain runs to 123 residues: Large ribosomal subunit protein uL18 (123 aa).

It belongs to the universal ribosomal protein uL18 family. Part of the 50S ribosomal subunit; part of the 5S rRNA/L5/L18/L25 subcomplex. Contacts the 5S and 23S rRNAs.

Functionally, this is one of the proteins that bind and probably mediate the attachment of the 5S RNA into the large ribosomal subunit, where it forms part of the central protuberance. This is Large ribosomal subunit protein uL18 from Chlamydia felis (strain Fe/C-56) (Chlamydophila felis).